A 180-amino-acid chain; its full sequence is Inner membrane-spanning protein YciB (180 aa).

5 helical membrane-spanning segments follow: residues Gln25–Ile45, Val49–Ile69, Ile76–Ile96, Ile118–Val138, and Phe150–Leu170.

The protein belongs to the YciB family.

It is found in the cell inner membrane. Functionally, plays a role in cell envelope biogenesis, maintenance of cell envelope integrity and membrane homeostasis. The polypeptide is Inner membrane-spanning protein YciB (Rickettsia felis (strain ATCC VR-1525 / URRWXCal2) (Rickettsia azadi)).